Reading from the N-terminus, the 339-residue chain is Leucine-rich repeat-containing protein 59 (339 aa).

The Cytoplasmic portion of the chain corresponds to 1 to 282 (MARGGGKSGS…KHSWSRSVLR (282 aa)). LRR repeat units lie at residues 10–31 (SLKD…SEVP), 40–61 (KATV…FCSL), 63–84 (HLVK…FGRL), and 86–107 (SLQH…FAQL). Positions 181–254 (MKVIQSEQDR…EMEKKTKKET (74 aa)) form a coiled coil. The disordered stretch occupies residues 186-275 (SEQDRERQRK…PPQPARHKHS (90 aa)). Positions 187–256 (EQDRERQRKL…EKKTKKETVQ (70 aa)) are enriched in basic and acidic residues. Residues 283–300 (ALLLVLLCILCTLAVCKL) form a helical membrane-spanning segment. Topologically, residues 301–339 (TELQHQPLCVSVNTLYEDVVAAVQNHKTLQNMLQQNSQQ) are lumenal.

In terms of assembly, interacts with SGO1.

It is found in the microsome membrane. The protein resides in the endoplasmic reticulum membrane. The protein localises to the nucleus envelope. In terms of biological role, required for nuclear import of FGF1. The polypeptide is Leucine-rich repeat-containing protein 59 (LRRC59) (Gallus gallus (Chicken)).